The primary structure comprises 1517 residues: DNA-directed RNA polymerase subunit beta' (1517 aa).

Zn(2+)-binding residues include Cys71, Cys73, Cys86, and Cys89. Residues Asp482, Asp484, and Asp486 each contribute to the Mg(2+) site. Positions 812, 886, 893, and 896 each coordinate Zn(2+).

Belongs to the RNA polymerase beta' chain family. As to quaternary structure, the RNAP catalytic core consists of 2 alpha, 1 beta, 1 beta' and 1 omega subunit. When a sigma factor is associated with the core the holoenzyme is formed, which can initiate transcription. Requires Mg(2+) as cofactor. Zn(2+) is required as a cofactor.

The catalysed reaction is RNA(n) + a ribonucleoside 5'-triphosphate = RNA(n+1) + diphosphate. In terms of biological role, DNA-dependent RNA polymerase catalyzes the transcription of DNA into RNA using the four ribonucleoside triphosphates as substrates. The polypeptide is DNA-directed RNA polymerase subunit beta' (Campylobacter jejuni (strain RM1221)).